The sequence spans 118 residues: MHEITLCQRALELIEQQASAYGAKRVTAVWIKIGAFSCVETSALSFCFDLVCRGTIAEGCKLHLEEQEAECWCEHCQQYVTLLTHRVRRCPQCHSDTLRIVADDGLQIRRIEIDETED.

Residue His-2 participates in Ni(2+) binding. Cys-73, Cys-76, Cys-90, and Cys-93 together coordinate Zn(2+).

It belongs to the HypA/HybF family.

Its function is as follows. Involved in the maturation of [NiFe] hydrogenases. Required for nickel insertion into the metal center of the hydrogenase. The sequence is that of Hydrogenase maturation factor HypA from Salmonella typhi.